A 102-amino-acid polypeptide reads, in one-letter code: Urease subunit beta (102 aa).

It belongs to the urease beta subunit family. In terms of assembly, heterotrimer of UreA (gamma), UreB (beta) and UreC (alpha) subunits. Three heterotrimers associate to form the active enzyme.

It is found in the cytoplasm. The catalysed reaction is urea + 2 H2O + H(+) = hydrogencarbonate + 2 NH4(+). It functions in the pathway nitrogen metabolism; urea degradation; CO(2) and NH(3) from urea (urease route): step 1/1. This is Urease subunit beta from Clostridium perfringens.